We begin with the raw amino-acid sequence, 551 residues long: Small ribosomal subunit protein bS1 (551 aa).

S1 motif domains follow at residues 21–83, 101–167, 188–256, 273–343, 360–430, and 447–516; these read GALV…LSRE, GEMV…VSRR, GQEI…LGMK, NSRV…LGIK, DEKI…LGIK, and DAVI…VSHK.

The protein belongs to the bacterial ribosomal protein bS1 family.

In terms of biological role, binds mRNA; thus facilitating recognition of the initiation point. It is needed to translate mRNA with a short Shine-Dalgarno (SD) purine-rich sequence. The protein is Small ribosomal subunit protein bS1 (rpsA) of Coxiella burnetii (strain RSA 493 / Nine Mile phase I).